The following is a 54-amino-acid chain: Apelin receptor early endogenous ligand (54 aa).

The signal sequence occupies residues 1-22; sequence MRFQQFLFAFFIFIMSLLLISG. N27 carries an N-linked (GlcNAc...) asparagine glycan.

This sequence belongs to the Elabela/Toddler family. As to quaternary structure, interacts with APLNR. In terms of tissue distribution, expressed in the intima of blood vessels. Expressed in endothelial cells in blood vessels in the heart and lung. Expressed in cytotrophoblasts and syncytiotrophoblasts of first-trimester placental tissue and term placentas (at protein level). Not detected in smooth muscle cells or cardiomyocytes (at protein level). Expressed in kidney. Expressed in blood vessels. Expressed in embryonic (ESCs) and induced (iPSCs) pluripotent stem cells. Most highly expressed in undifferentiated embryonic stem cell and is rapidly down-regulated during differentiation.

Its subcellular location is the secreted. It localises to the extracellular space. Functionally, peptide hormone that functions as endogenous ligand for the G-protein-coupled apelin receptor (APLNR/APJ), that plays a role in the regulation of normal cardiovascular function and fluid homeostasis. Functions as a balanced agonist activating both G(i) protein pathway and beta-arrestin pathway of APLNR. Downstream G proteins activation, apelin can inhibit cAMP production and activate key intracellular effectors such as ERKs. On the other hand, APLNR activation induces beta-arrestin recruitment to the membrane leading to desensitization and internalization of the receptor. Required for mesendodermal differentiation, blood vessels formation and heart morphogenesis during early development and for adult cardiovascular homeostasis. Acts as a motogen by promoting mesendodermal cell migration during gastrulation by binding and activating APLNR. Acts as an early embryonic regulator of cellular movement with a role in migration and development of cardiac progenitor cells. May act as a chemoattractant for the activation of angioblast migration toward the embryonic midline, i.e. the position of the future vessel formation, during vasculogenesis. Positively regulates sinus venosus (SV)-derived endothelial cells migration into the developing heart to promote coronary blood vessel sprouting. Plays a role in placental vascular development; promotes placental trophoblast invasion and spiral artery remodeling in the uterus. Involved in the regulation of maternal cardiovascular homeostasis to prevent gestational hypertension and for potent cardioprotective functions during heart failure. Mediates myocardial contractility in an ERK1/2-dependent manner. The polypeptide is Apelin receptor early endogenous ligand (Homo sapiens (Human)).